Reading from the N-terminus, the 102-residue chain is Protein transport protein sec61 subunit beta (102 aa).

Polar residues predominate over residues 1 to 15; sequence MSSTKASGSVKNSAA. The disordered stretch occupies residues 1-53; the sequence is MSSTKASGSVKNSAASAPGGPKSQIRRRAAVEKNTKESNSGPAGARAAGAPGS. Residues 1–72 lie on the Cytoplasmic side of the membrane; the sequence is MSSTKASGSV…DEASGFKVDP (72 aa). The segment covering 41-52 has biased composition (low complexity); it reads GPAGARAAGAPG. Residues 73–93 form a helical membrane-spanning segment; sequence VVVMVLSVGFIASVFLLHIVA.

The protein belongs to the SEC61-beta family. As to quaternary structure, heterotrimeric complex composed of SEC61, SBH1 and SSS1.

The protein localises to the endoplasmic reticulum membrane. In terms of biological role, necessary for protein translocation in the endoplasmic reticulum. In Schizosaccharomyces pombe (strain 972 / ATCC 24843) (Fission yeast), this protein is Protein transport protein sec61 subunit beta (sbh1).